A 156-amino-acid polypeptide reads, in one-letter code: Small ribosomal subunit protein uS7 (156 aa).

The protein belongs to the universal ribosomal protein uS7 family. In terms of assembly, part of the 30S ribosomal subunit. Contacts proteins S9 and S11.

Functionally, one of the primary rRNA binding proteins, it binds directly to 16S rRNA where it nucleates assembly of the head domain of the 30S subunit. Is located at the subunit interface close to the decoding center, probably blocks exit of the E-site tRNA. This chain is Small ribosomal subunit protein uS7, found in Nitratiruptor sp. (strain SB155-2).